Here is a 160-residue protein sequence, read N- to C-terminus: Envelope glycoprotein L (160 aa).

Positions 1-22 (MASHKWLLQMIVFLKTITIAYC) are cleaved as a signal peptide. The tract at residues 24–149 (HLQDDTPLFF…TNIPENGCVW (126 aa)) is interaction with gH. In terms of domain architecture, gL alphaherpesvirus-type spans 28-160 (DTPLFFGAKP…ADRLFQRVCQ (133 aa)). 2 disulfides stabilise this stretch: Cys-49–Cys-80 and Cys-147–Cys-159.

Belongs to the herpesviridae glycoprotein L (gL) family. Alphaherpesvirinae gL subfamily. In terms of assembly, interacts with glycoprotein H (gH); this interaction is necessary for the correct processing and cell surface expression of gH. The heterodimer gH/gL seems to interact with gB trimers during fusion.

It localises to the virion membrane. Its subcellular location is the host cell membrane. It is found in the host Golgi apparatus. The protein localises to the host trans-Golgi network. The heterodimer glycoprotein H-glycoprotein L is required for the fusion of viral and plasma membranes leading to virus entry into the host cell. Acts as a functional inhibitor of gH and maintains gH in an inhibited form. Upon binding to host integrins, gL dissociates from gH leading to activation of the viral fusion glycoproteins gB and gH. The sequence is that of Envelope glycoprotein L from Varicella-zoster virus (strain Oka vaccine) (HHV-3).